A 373-amino-acid chain; its full sequence is Flap endonuclease 1 (373 aa).

Positions 1 to 105 (MGIKGLNALI…GELEKRLKRR (105 aa)) are N-domain. Asp34 is a Mg(2+) binding site. 2 residues coordinate DNA: Arg47 and Arg71. Mg(2+) is bound by residues Asp87, Glu159, Glu161, Asp180, and Asp182. Residues 123–254 (DIAKFERRTV…VTAFKLIKEH (132 aa)) form an I-domain region. DNA is bound at residue Glu159. DNA-binding residues include Gly232 and Asp234. Asp234 contacts Mg(2+). Positions 340–348 (TQGRLDKFF) are interaction with PCNA. The tract at residues 347–373 (FFVVKKRPAEEKKGKNTKEEKPKKKRK) is disordered.

Belongs to the XPG/RAD2 endonuclease family. FEN1 subfamily. In terms of assembly, interacts with PCNA. Three molecules of FEN1 bind to one PCNA trimer with each molecule binding to one PCNA monomer. PCNA stimulates the nuclease activity without altering cleavage specificity. Requires Mg(2+) as cofactor. Phosphorylated. Phosphorylation upon DNA damage induces relocalization to the nuclear plasma.

The protein localises to the nucleus. Its subcellular location is the nucleolus. It localises to the nucleoplasm. The protein resides in the mitochondrion. In terms of biological role, structure-specific nuclease with 5'-flap endonuclease and 5'-3' exonuclease activities involved in DNA replication and repair. During DNA replication, cleaves the 5'-overhanging flap structure that is generated by displacement synthesis when DNA polymerase encounters the 5'-end of a downstream Okazaki fragment. It enters the flap from the 5'-end and then tracks to cleave the flap base, leaving a nick for ligation. Also involved in the long patch base excision repair (LP-BER) pathway, by cleaving within the apurinic/apyrimidinic (AP) site-terminated flap. Acts as a genome stabilization factor that prevents flaps from equilibrating into structures that lead to duplications and deletions. Also possesses 5'-3' exonuclease activity on nicked or gapped double-stranded DNA, and exhibits RNase H activity. Also involved in replication and repair of rDNA and in repairing mitochondrial DNA. The polypeptide is Flap endonuclease 1 (Komagataella phaffii (strain GS115 / ATCC 20864) (Yeast)).